Consider the following 209-residue polypeptide: MSKVYVFDHPLIQHKLTYIRDKSTGTKEFRELVDEVAALMAFEITRDLPLQEVTVETPVGPATSKKIAGKKLGLVPILRAGLGMVDGILRMIPAAKVGHVGLYRDPETLQPVEYYVKLPTDVEERELIVIDPMLATGGSAVEAINCLKKRGATSIKLMCLIAAPEGVEVVKEAHPDVDIYLAALDEKLNEKGYIVPGLGDAGDRLFGTK.

Residues R79, R104, and 131–139 each bind 5-phospho-alpha-D-ribose 1-diphosphate; that span reads DPMLATGGS. Uracil is bound by residues I194 and 199–201; that span reads GDA. D200 contributes to the 5-phospho-alpha-D-ribose 1-diphosphate binding site.

The protein belongs to the UPRTase family. Requires Mg(2+) as cofactor.

The enzyme catalyses UMP + diphosphate = 5-phospho-alpha-D-ribose 1-diphosphate + uracil. It functions in the pathway pyrimidine metabolism; UMP biosynthesis via salvage pathway; UMP from uracil: step 1/1. Allosterically activated by GTP. Catalyzes the conversion of uracil and 5-phospho-alpha-D-ribose 1-diphosphate (PRPP) to UMP and diphosphate. This Halalkalibacterium halodurans (strain ATCC BAA-125 / DSM 18197 / FERM 7344 / JCM 9153 / C-125) (Bacillus halodurans) protein is Uracil phosphoribosyltransferase.